A 415-amino-acid chain; its full sequence is Histidine--tRNA ligase (415 aa).

This sequence belongs to the class-II aminoacyl-tRNA synthetase family. As to quaternary structure, homodimer.

It localises to the cytoplasm. It catalyses the reaction tRNA(His) + L-histidine + ATP = L-histidyl-tRNA(His) + AMP + diphosphate + H(+). This Phytoplasma australiense protein is Histidine--tRNA ligase.